We begin with the raw amino-acid sequence, 689 residues long: Armadillo-like helical domain-containing protein 3 (689 aa).

Residues 520-538 (IFTLTLMVVNLFNMFITYG) traverse the membrane as a helical segment.

Belongs to the ARMH3 family.

The protein localises to the golgi apparatus membrane. It is found in the cytoplasm. Its function is as follows. May be involved in Golgi maintenance and protein secretion. The polypeptide is Armadillo-like helical domain-containing protein 3 (Xenopus laevis (African clawed frog)).